The sequence spans 247 residues: UPF0309 protein lin2794 (247 aa).

The 184-residue stretch at 31–214 (VAESIENDGV…EKMVNDNFTP (184 aa)) folds into the SIS domain.

The protein belongs to the UPF0309 family.

In Listeria innocua serovar 6a (strain ATCC BAA-680 / CLIP 11262), this protein is UPF0309 protein lin2794.